The following is a 479-amino-acid chain: MTFKRIASSIQQDRLSNLPDVLLIMIISCLSFKECIRTSVLAKRWRYLCRETRNISFKETEYVDHFVSDKRSKRVSFAAYMCQWVSRYHGRYIETLEIYFSIPSDFLAAVESLIEFAVSRQVKNLVLDFSDPSWISTSCASRYDYVCVQLPVCVYSLTTLESLKIYSCGFDPSKFSNSRLPRKLSIGWIKLTDVESLLLNSPTLKSLSINYCWGIEIRNIAGDMKEFVFESCDFSSFMVCCFDLPNVEIFKYSGQILSFDVKRMNMSIKDVILDFTAEGLYEDRNQRTKLEGSVLSAFLNNLRGARTLSVCPYLLQTIQECEDPFDLLRPMETQHLVLRTRLHVMEFKGIKLLLDNCPNLETLTFDIFSRSLFSYNKSYYGVGPRSYWKKNLTYKSLPKTLKVVVVRNFTGRFGELNVLKFLIQSGRGRWPGREHGPMLERVELYMDSSMAESQKELADDGAMMLQSISGDVQVLVYDP.

The 49-residue stretch at 12–60 (QDRLSNLPDVLLIMIISCLSFKECIRTSVLAKRWRYLCRETRNISFKET) folds into the F-box domain. 7 LRR repeats span residues 99-129 (YFSIPSDFLAAVESLIEFAVSRQVKNLVLDF), 139-167 (CASRYDYVCVQLPVCVYSLTTLESLKIYS), 186-211 (IGWIKLTDVESLLLNSPTLKSLSINY), 228-254 (VFESCDFSSFMVCCFDLPNVEIFKYSG), 287-312 (RTKLEGSVLSAFLNNLRGARTLSVCP), 342-367 (LHVMEFKGIKLLLDNCPNLETLTFDI), and 419-446 (LKFLIQSGRGRWPGREHGPMLERVELYM).

The protein is Putative F-box/LRR-repeat protein At1g56400 of Arabidopsis thaliana (Mouse-ear cress).